A 613-amino-acid polypeptide reads, in one-letter code: Zinc metalloproteinase-disintegrin-like EoVMP2 (613 aa).

The signal sequence occupies residues 1–20 (MMQVLLVTICLAVFPYQGSS). Residues 21 to 194 (IILESGNVND…EASQLFATSE (174 aa)) constitute a propeptide that is removed on maturation. A Pyrrolidone carboxylic acid modification is found at Gln195. The Peptidase M12B domain occupies 201-397 (RYIEFFIVVD…RNPKCMINKP (197 aa)). Residue Glu204 participates in Ca(2+) binding. Asn219 carries N-linked (GlcNAc...) asparagine glycosylation. Position 288 (Asp288) interacts with Ca(2+). 3 cysteine pairs are disulfide-bonded: Cys312–Cys392, Cys352–Cys376, and Cys354–Cys359. His337 is a binding site for Zn(2+). Glu338 is a catalytic residue. 2 residues coordinate Zn(2+): His341 and His347. A glycan (N-linked (GlcNAc...) asparagine) is linked at Asn375. Positions 392, 395, 407, 410, 412, 414, 417, and 420 each coordinate Ca(2+). One can recognise a Disintegrin domain in the interval 405 to 491 (PPVCGNGLLE…DCPIDGFHAN (87 aa)). Intrachain disulfides connect Cys408–Cys437, Cys419–Cys432, Cys421–Cys427, Cys431–Cys454, Cys445–Cys451, Cys450–Cys476, Cys463–Cys483, Cys470–Cys502, Cys495–Cys507, Cys514–Cys564, Cys529–Cys575, Cys542–Cys552, Cys559–Cys601, and Cys595–Cys606. Residues 469–471 (DCD) carry the D/ECD-tripeptide motif.

The protein belongs to the venom metalloproteinase (M12B) family. P-III subfamily. P-IIIa sub-subfamily. Monomer. Zn(2+) is required as a cofactor. As to expression, expressed by the venom gland.

The protein localises to the secreted. Functionally, snake venom zinc metalloprotease that possesses high hemorrhagic activity. It inhibits collagen-induced platelet aggregation and activates prothrombin (F2). The chain is Zinc metalloproteinase-disintegrin-like EoVMP2 (Svmp3-Eoc22) from Echis ocellatus (Ocellated saw-scaled viper).